The primary structure comprises 188 residues: Phospholipase A2 inhibitor 31 kDa subunit (188 aa).

8 disulfides stabilise this stretch: C3–C27, C6–C13, C20–C48, C54–C75, C76–C81, C99–C124, C117–C146, and C150–C172. N-linked (GlcNAc...) asparagine glycosylation is present at N157.

This sequence belongs to the CNF-like-inhibitor family. In terms of assembly, heterodimer with phospholipase A2 inhibitor 25 kDa. In terms of processing, N-glycosylated. In terms of tissue distribution, expressed by the liver.

The protein localises to the secreted. Inhibits the enzymatic activity of phospholipase A2. This chain is Phospholipase A2 inhibitor 31 kDa subunit, found in Naja kaouthia (Monocled cobra).